A 114-amino-acid polypeptide reads, in one-letter code: uncharacterized protein (114 aa).

This is an uncharacterized protein from Bacillus subtilis (strain 168).